Consider the following 756-residue polypeptide: Catalase-peroxidase (756 aa).

The first 26 residues, 1–26, serve as a signal peptide directing secretion; the sequence is MKGKTVNKQTLAALVSALLVFNPAVA. Residues 126-248 constitute a cross-link (tryptophyl-tyrosyl-methioninium (Trp-Tyr) (with M-274)); the sequence is WHSAGTYRTL…LGATHMGLIY (123 aa). The Proton acceptor role is filled by H127. The segment at residues 248–274 is a cross-link (tryptophyl-tyrosyl-methioninium (Tyr-Met) (with W-126)); it reads YVNPEGPKGVPDPLGSAKNIRTAFSRM. H289 serves as a coordination point for heme b.

The protein belongs to the peroxidase family. Peroxidase/catalase subfamily. Homodimer or homotetramer. Heme b serves as cofactor. Formation of the three residue Trp-Tyr-Met cross-link is important for the catalase, but not the peroxidase activity of the enzyme.

The catalysed reaction is H2O2 + AH2 = A + 2 H2O. It catalyses the reaction 2 H2O2 = O2 + 2 H2O. Bifunctional enzyme with both catalase and broad-spectrum peroxidase activity. In Shewanella loihica (strain ATCC BAA-1088 / PV-4), this protein is Catalase-peroxidase.